We begin with the raw amino-acid sequence, 891 residues long: Alanine--tRNA ligase (891 aa).

Zn(2+)-binding residues include histidine 564, histidine 568, cysteine 677, and histidine 681.

The protein belongs to the class-II aminoacyl-tRNA synthetase family. Zn(2+) is required as a cofactor.

It localises to the cytoplasm. It catalyses the reaction tRNA(Ala) + L-alanine + ATP = L-alanyl-tRNA(Ala) + AMP + diphosphate. Functionally, catalyzes the attachment of alanine to tRNA(Ala) in a two-step reaction: alanine is first activated by ATP to form Ala-AMP and then transferred to the acceptor end of tRNA(Ala). Also edits incorrectly charged Ser-tRNA(Ala) and Gly-tRNA(Ala) via its editing domain. In Rhodopseudomonas palustris (strain BisA53), this protein is Alanine--tRNA ligase.